The following is a 599-amino-acid chain: Elongation factor 4 (599 aa).

The 183-residue stretch at 5 to 187 (SHIRNFSIVA…SIVQNLPAPK (183 aa)) folds into the tr-type G domain. GTP contacts are provided by residues 17 to 22 (DHGKST) and 134 to 137 (NKID).

This sequence belongs to the TRAFAC class translation factor GTPase superfamily. Classic translation factor GTPase family. LepA subfamily.

The protein resides in the cell inner membrane. It catalyses the reaction GTP + H2O = GDP + phosphate + H(+). Functionally, required for accurate and efficient protein synthesis under certain stress conditions. May act as a fidelity factor of the translation reaction, by catalyzing a one-codon backward translocation of tRNAs on improperly translocated ribosomes. Back-translocation proceeds from a post-translocation (POST) complex to a pre-translocation (PRE) complex, thus giving elongation factor G a second chance to translocate the tRNAs correctly. Binds to ribosomes in a GTP-dependent manner. The polypeptide is Elongation factor 4 (Roseobacter denitrificans (strain ATCC 33942 / OCh 114) (Erythrobacter sp. (strain OCh 114))).